The following is a 261-amino-acid chain: Acyl-[acyl-carrier-protein]--UDP-N-acetylglucosamine O-acyltransferase (261 aa).

The protein belongs to the transferase hexapeptide repeat family. LpxA subfamily. Homotrimer.

It localises to the cytoplasm. It catalyses the reaction a (3R)-hydroxyacyl-[ACP] + UDP-N-acetyl-alpha-D-glucosamine = a UDP-3-O-[(3R)-3-hydroxyacyl]-N-acetyl-alpha-D-glucosamine + holo-[ACP]. It functions in the pathway glycolipid biosynthesis; lipid IV(A) biosynthesis; lipid IV(A) from (3R)-3-hydroxytetradecanoyl-[acyl-carrier-protein] and UDP-N-acetyl-alpha-D-glucosamine: step 1/6. Involved in the biosynthesis of lipid A, a phosphorylated glycolipid that anchors the lipopolysaccharide to the outer membrane of the cell. This Aquifex aeolicus (strain VF5) protein is Acyl-[acyl-carrier-protein]--UDP-N-acetylglucosamine O-acyltransferase.